The chain runs to 220 residues: UPF0502 protein VVA1225 (220 aa).

Belongs to the UPF0502 family.

The protein is UPF0502 protein VVA1225 of Vibrio vulnificus (strain YJ016).